The sequence spans 273 residues: Glutamate transport system permease protein GluD (273 aa).

Helical transmembrane passes span 26-46, 64-84, 100-120, 150-170, and 200-220; these read ILPG…LALV, WFCA…LMIF, LAFA…IAEI, ILLP…MVIA, and LAAL…LTAL. Residues 30-221 form the ABC transmembrane type-1 domain; sequence LWGTLKSAVF…VLNFSLTALA (192 aa). Residues 242-273 are disordered; it reads PEQPDQGLETKDNVNVDWQDPDYKDLKTPGVQ. A compositionally biased stretch (basic and acidic residues) spans 262–273; it reads PDYKDLKTPGVQ.

This sequence belongs to the binding-protein-dependent transport system permease family. HisMQ subfamily. In terms of assembly, the complex is composed of two ATP-binding proteins (GluA), two transmembrane proteins (GluC and GluD) and a solute-binding protein (GluB).

Its subcellular location is the cell membrane. In terms of biological role, part of the ABC transporter complex GluABCD involved in glutamate uptake. Probably responsible for the translocation of the substrate across the membrane. The polypeptide is Glutamate transport system permease protein GluD (Corynebacterium glutamicum (strain ATCC 13032 / DSM 20300 / JCM 1318 / BCRC 11384 / CCUG 27702 / LMG 3730 / NBRC 12168 / NCIMB 10025 / NRRL B-2784 / 534)).